Consider the following 325-residue polypeptide: Eukaryotic translation initiation factor 3 subunit I (325 aa).

WD repeat units lie at residues 8–47 (GHERSITQIKYNREGDLLFTVAKDPIVNVWYSVNGERLGT), 50–91 (GHTG…ALLK), 144–183 (CNDSKITSAVWGPLGECIIAGHESGELNQYSAKSGEVLVN), and 186–225 (EHSRQINDIQLSRDMTMFVTASKDNTAKLFDSTTLEHQKT). T219 carries the post-translational modification Phosphothreonine. K264 bears the N6-acetyllysine mark. K282 is covalently cross-linked (Glycyl lysine isopeptide (Lys-Gly) (interchain with G-Cter in ubiquitin)). One copy of the WD 5 repeat lies at 283-324 (GHFGLINSVAFHPDGKSYSSGGEDGYVRIHYFDPQYFEFEFE). Y308 bears the Phosphotyrosine mark.

It belongs to the eIF-3 subunit I family. As to quaternary structure, component of the eukaryotic translation initiation factor 3 (eIF-3) complex, which is composed of 13 subunits: EIF3A, EIF3B, EIF3C, EIF3D, EIF3E, EIF3F, EIF3G, EIF3H, EIF3I, EIF3J, EIF3K, EIF3L and EIF3M. The eIF-3 complex appears to include 3 stable modules: module A is composed of EIF3A, EIF3B, EIF3G and EIF3I; module B is composed of EIF3F, EIF3H, and EIF3M; and module C is composed of EIF3C, EIF3D, EIF3E, EIF3K and EIF3L. EIF3C of module C binds EIF3B of module A and EIF3H of module B, thereby linking the three modules. EIF3J is a labile subunit that binds to the eIF-3 complex via EIF3B. The eIF-3 complex interacts with RPS6KB1 under conditions of nutrient depletion. Mitogenic stimulation leads to binding and activation of a complex composed of MTOR and RPTOR, leading to phosphorylation and release of RPS6KB1 and binding of EIF4B to eIF-3. In terms of processing, phosphorylated by TGF-beta type II receptor.

It localises to the cytoplasm. In terms of biological role, component of the eukaryotic translation initiation factor 3 (eIF-3) complex, which is required for several steps in the initiation of protein synthesis. The eIF-3 complex associates with the 40S ribosome and facilitates the recruitment of eIF-1, eIF-1A, eIF-2:GTP:methionyl-tRNAi and eIF-5 to form the 43S pre-initiation complex (43S PIC). The eIF-3 complex stimulates mRNA recruitment to the 43S PIC and scanning of the mRNA for AUG recognition. The eIF-3 complex is also required for disassembly and recycling of post-termination ribosomal complexes and subsequently prevents premature joining of the 40S and 60S ribosomal subunits prior to initiation. The eIF-3 complex specifically targets and initiates translation of a subset of mRNAs involved in cell proliferation, including cell cycling, differentiation and apoptosis, and uses different modes of RNA stem-loop binding to exert either translational activation or repression. This Pongo abelii (Sumatran orangutan) protein is Eukaryotic translation initiation factor 3 subunit I.